Here is a 510-residue protein sequence, read N- to C-terminus: NAD(P)H-quinone oxidoreductase subunit 2 A, chloroplastic (510 aa).

A run of 12 helical transmembrane segments spans residues 31 to 51 (FIFP…IDLT), 59 to 79 (WFYF…LFRW), 99 to 119 (IFQF…VEYI), 124 to 144 (MAIT…MFLC), 149 to 169 (LITI…LSGY), 183 to 203 (YLLM…WLYG), 229 to 249 (ISIA…PAPF), 295 to 315 (WHLL…LLAI), 323 to 343 (MLAY…IVGD), 354 to 374 (YMLF…LFGL), 395 to 415 (ALSL…AGFF), and 418 to 438 (LYLF…IGLL).

This sequence belongs to the complex I subunit 2 family. NDH is composed of at least 16 different subunits, 5 of which are encoded in the nucleus.

The protein resides in the plastid. The protein localises to the chloroplast thylakoid membrane. It carries out the reaction a plastoquinone + NADH + (n+1) H(+)(in) = a plastoquinol + NAD(+) + n H(+)(out). It catalyses the reaction a plastoquinone + NADPH + (n+1) H(+)(in) = a plastoquinol + NADP(+) + n H(+)(out). NDH shuttles electrons from NAD(P)H:plastoquinone, via FMN and iron-sulfur (Fe-S) centers, to quinones in the photosynthetic chain and possibly in a chloroplast respiratory chain. The immediate electron acceptor for the enzyme in this species is believed to be plastoquinone. Couples the redox reaction to proton translocation, and thus conserves the redox energy in a proton gradient. In Saccharum officinarum (Sugarcane), this protein is NAD(P)H-quinone oxidoreductase subunit 2 A, chloroplastic.